Reading from the N-terminus, the 681-residue chain is MRKKLFGQLQRIGKALMLPVAILPAAGLLLAIGTAMQGEALQHYLPFIQNGGVQTVAKLMTGAGGIIFDNLPMIFALGVAIGLAGGDGVAAIAAFVGYIIMNKTMGDFLQVTPKNIGDPASGYASILGIPTLQTGVFGGIIIGALAAWCYNKFYNINLPSYLGFFAGKRFVPIMMATTSFILAFPMALIWPTIQSGLNAFSTGLLDSNTGVAVFLFGFIKRLLIPFGLHHIFHAPFWFEFGSWKNAAGEIIHGDQRIFIEQIREGAHLTAGKFMQGEFPVMMFGLPAAALAIYHTAKPENKKVVAGLMGSAALTSFLTGITEPLEFSFLFVAPLLFFIHAVLDGLSFLTLYLLDLHLGYTFSGGFIDYFLLGILPNKTQWWLVIPVGLVYAVIYYFVFRFLIVKLKYKTPGREDKQSQAATASATELPYAVLEAMGGKANIKHLDACITRLRVEVNDKSKVDVPGLKDLGASGVLEVGNNMQAIFGPKSDQIKHEMQQIMNGQVVENPTTMEDDKDETVVVAEDKSATSELSHIVHAPLTGEVTPLSEVPDQVFSEKMMGDGIAIKPSQGEVRAPFNGKVQMIFPTKHAIGLVSDSGLELLIHIGLDTVKLNGEGFTLHVEEGQEVKQGDLLINFDLDYIRKHAKSDITPIIVTQGNITNLDFKQGEHGNISFGDQLFEAK.

A PTS EIIC type-1 domain is found at 3 to 414 (KKLFGQLQRI…LKYKTPGRED (412 aa)). Helical transmembrane passes span 16–36 (LMLP…GTAM), 73–93 (MIFA…AAIA), 126–146 (ILGI…GALA), 170–190 (FVPI…ALIW), 199–219 (AFST…FGFI), 273–293 (FMQG…LAIY), 303–323 (VVAG…ITEP), 328–348 (FLFV…LSFL), 355–375 (LHLG…GILP), and 383–403 (VIPV…FLIV). The PTS EIIB type-1 domain occupies 425 to 506 (TELPYAVLEA…QQIMNGQVVE (82 aa)). Catalysis depends on Cys447, which acts as the Phosphocysteine intermediate; for EIIB activity. The PTS EIIA type-1 domain maps to 551–655 (DQVFSEKMMG…SDITPIIVTQ (105 aa)). His603 functions as the Tele-phosphohistidine intermediate; for EIIA activity in the catalytic mechanism.

Its subcellular location is the cell membrane. The catalysed reaction is N(pros)-phospho-L-histidyl-[protein] + D-glucose(out) = D-glucose 6-phosphate(in) + L-histidyl-[protein]. Its function is as follows. The phosphoenolpyruvate-dependent sugar phosphotransferase system (sugar PTS), a major carbohydrate active transport system, catalyzes the phosphorylation of incoming sugar substrates concomitantly with their translocation across the cell membrane. This system is involved in glucose transport. The polypeptide is PTS system glucose-specific EIICBA component (ptsG) (Staphylococcus aureus (strain bovine RF122 / ET3-1)).